Here is a 131-residue protein sequence, read N- to C-terminus: Large ribosomal subunit protein bL19 (131 aa).

Belongs to the bacterial ribosomal protein bL19 family.

In terms of biological role, this protein is located at the 30S-50S ribosomal subunit interface and may play a role in the structure and function of the aminoacyl-tRNA binding site. The sequence is that of Large ribosomal subunit protein bL19 from Rhodopseudomonas palustris (strain HaA2).